We begin with the raw amino-acid sequence, 448 residues long: Phosphoglucosamine mutase (448 aa).

The active-site Phosphoserine intermediate is S100. Residues S100, D240, D242, and D244 each contribute to the Mg(2+) site. S100 bears the Phosphoserine mark.

The protein belongs to the phosphohexose mutase family. It depends on Mg(2+) as a cofactor. Activated by phosphorylation.

The enzyme catalyses alpha-D-glucosamine 1-phosphate = D-glucosamine 6-phosphate. Its function is as follows. Catalyzes the conversion of glucosamine-6-phosphate to glucosamine-1-phosphate. This chain is Phosphoglucosamine mutase, found in Clostridium beijerinckii (strain ATCC 51743 / NCIMB 8052) (Clostridium acetobutylicum).